We begin with the raw amino-acid sequence, 152 residues long: UPF0225 protein YchJ (152 aa).

The protein belongs to the UPF0225 family.

The chain is UPF0225 protein YchJ from Shigella boydii serotype 18 (strain CDC 3083-94 / BS512).